We begin with the raw amino-acid sequence, 435 residues long: Protein CHLOROPLAST IMPORT APPARATUS 2 (435 aa).

Residues 1-59 constitute a chloroplast transit peptide; the sequence is MSACLSSGGGGAAAYSFELEKVKSPPPSSSTTTTRATSPSSTISESSNSPLAISTRKPR. Disordered regions lie at residues 21–66 and 412–435; these read KVKS…KRPN and ADQR…SGQR. A compositionally biased stretch (low complexity) spans 29–49; it reads SSTTTTRATSPSSTISESSNS. Residues 56 to 65 are compositionally biased toward basic residues; the sequence is RKPRTQRKRP. The CCT domain occupies 383 to 425; it reads REASVLRYKEKRRTRLFSKKIRYQVRKLNADQRPRMKGRFVRR.

In terms of tissue distribution, expressed in leaves and young flower buds.

It localises to the plastid. The protein localises to the chloroplast. It is found in the nucleus. Functionally, responsible for specific up-regulation of the translocon genes TOC33 and TOC75 in leaves. Involved in the general chloroplast protein import pathway regulation, including protein import and protein translation efficiencies. In Arabidopsis thaliana (Mouse-ear cress), this protein is Protein CHLOROPLAST IMPORT APPARATUS 2 (CIA2).